The following is a 255-amino-acid chain: Acetylglutamate kinase (255 aa).

Substrate contacts are provided by residues 40-41 (GG), Arg-62, and Asn-153.

It belongs to the acetylglutamate kinase family. ArgB subfamily.

The protein resides in the cytoplasm. The catalysed reaction is N-acetyl-L-glutamate + ATP = N-acetyl-L-glutamyl 5-phosphate + ADP. Its pathway is amino-acid biosynthesis; L-arginine biosynthesis; N(2)-acetyl-L-ornithine from L-glutamate: step 2/4. Its function is as follows. Catalyzes the ATP-dependent phosphorylation of N-acetyl-L-glutamate. The polypeptide is Acetylglutamate kinase (Bacillus cereus (strain G9842)).